The following is a 341-amino-acid chain: Probable dual-specificity RNA methyltransferase RlmN (341 aa).

The Proton acceptor role is filled by glutamate 88. In terms of domain architecture, Radical SAM core spans 94–314 (EGDRATLCIS…ESHGFTCTIR (221 aa)). Cysteine 101 and cysteine 325 form a disulfide bridge. [4Fe-4S] cluster is bound by residues cysteine 108, cysteine 112, and cysteine 115. Residues 153–154 (GE), serine 185, 206–208 (SLH), and histidine 282 contribute to the S-adenosyl-L-methionine site. Cysteine 325 serves as the catalytic S-methylcysteine intermediate.

The protein belongs to the radical SAM superfamily. RlmN family. The cofactor is [4Fe-4S] cluster.

The protein resides in the cytoplasm. The enzyme catalyses adenosine(2503) in 23S rRNA + 2 reduced [2Fe-2S]-[ferredoxin] + 2 S-adenosyl-L-methionine = 2-methyladenosine(2503) in 23S rRNA + 5'-deoxyadenosine + L-methionine + 2 oxidized [2Fe-2S]-[ferredoxin] + S-adenosyl-L-homocysteine. It catalyses the reaction adenosine(37) in tRNA + 2 reduced [2Fe-2S]-[ferredoxin] + 2 S-adenosyl-L-methionine = 2-methyladenosine(37) in tRNA + 5'-deoxyadenosine + L-methionine + 2 oxidized [2Fe-2S]-[ferredoxin] + S-adenosyl-L-homocysteine. Specifically methylates position 2 of adenine 2503 in 23S rRNA and position 2 of adenine 37 in tRNAs. This Porphyromonas gingivalis (strain ATCC BAA-308 / W83) protein is Probable dual-specificity RNA methyltransferase RlmN.